Consider the following 211-residue polypeptide: Thiamine-phosphate synthase (211 aa).

4-amino-2-methyl-5-(diphosphooxymethyl)pyrimidine contacts are provided by residues 37 to 41 (QLRIK) and N69. Positions 70 and 89 each coordinate Mg(2+). S108 contributes to the 4-amino-2-methyl-5-(diphosphooxymethyl)pyrimidine binding site. 134–136 (TQT) contributes to the 2-[(2R,5Z)-2-carboxy-4-methylthiazol-5(2H)-ylidene]ethyl phosphate binding site. K137 serves as a coordination point for 4-amino-2-methyl-5-(diphosphooxymethyl)pyrimidine. 2-[(2R,5Z)-2-carboxy-4-methylthiazol-5(2H)-ylidene]ethyl phosphate-binding positions include G166 and 186–187 (VS).

Belongs to the thiamine-phosphate synthase family. It depends on Mg(2+) as a cofactor.

The catalysed reaction is 2-[(2R,5Z)-2-carboxy-4-methylthiazol-5(2H)-ylidene]ethyl phosphate + 4-amino-2-methyl-5-(diphosphooxymethyl)pyrimidine + 2 H(+) = thiamine phosphate + CO2 + diphosphate. The enzyme catalyses 2-(2-carboxy-4-methylthiazol-5-yl)ethyl phosphate + 4-amino-2-methyl-5-(diphosphooxymethyl)pyrimidine + 2 H(+) = thiamine phosphate + CO2 + diphosphate. It catalyses the reaction 4-methyl-5-(2-phosphooxyethyl)-thiazole + 4-amino-2-methyl-5-(diphosphooxymethyl)pyrimidine + H(+) = thiamine phosphate + diphosphate. The protein operates within cofactor biosynthesis; thiamine diphosphate biosynthesis; thiamine phosphate from 4-amino-2-methyl-5-diphosphomethylpyrimidine and 4-methyl-5-(2-phosphoethyl)-thiazole: step 1/1. Condenses 4-methyl-5-(beta-hydroxyethyl)thiazole monophosphate (THZ-P) and 2-methyl-4-amino-5-hydroxymethyl pyrimidine pyrophosphate (HMP-PP) to form thiamine monophosphate (TMP). The chain is Thiamine-phosphate synthase from Salmonella newport (strain SL254).